Here is a 389-residue protein sequence, read N- to C-terminus: Monomeric sarcosine oxidase (389 aa).

8-38 (DVIVVGAGSMGMAAGYYLSKQGVKTLLVDSF) is a binding site for FAD. An S-8alpha-FAD cysteine modification is found at Cys-318.

It belongs to the MSOX/MTOX family. MSOX subfamily. As to quaternary structure, monomer. FAD serves as cofactor.

The protein localises to the cytoplasm. It carries out the reaction sarcosine + O2 + H2O = formaldehyde + glycine + H2O2. Catalyzes the oxidative demethylation of sarcosine. In Arthrobacter sp. (strain TE1826), this protein is Monomeric sarcosine oxidase (soxA).